A 469-amino-acid polypeptide reads, in one-letter code: Sulfate adenylyltransferase subunit 1 (469 aa).

Residues 22-238 (KQLLRFITCG…LETIKIDEDR (217 aa)) form the tr-type G domain. Positions 31–38 (GSVDDGKS) are G1. Residue 31–38 (GSVDDGKS) coordinates GTP. Residues 89–93 (GITID) form a G2 region. Residues 110-113 (DTPG) form a G3 region. Residues 110–114 (DTPGH) and 165–168 (NKMD) each bind GTP. The segment at 165-168 (NKMD) is G4. Positions 203–205 (SAL) are G5.

Belongs to the TRAFAC class translation factor GTPase superfamily. Classic translation factor GTPase family. CysN/NodQ subfamily. As to quaternary structure, heterodimer composed of CysD, the smaller subunit, and CysN.

The catalysed reaction is sulfate + ATP + H(+) = adenosine 5'-phosphosulfate + diphosphate. It functions in the pathway sulfur metabolism; hydrogen sulfide biosynthesis; sulfite from sulfate: step 1/3. Its function is as follows. With CysD forms the ATP sulfurylase (ATPS) that catalyzes the adenylation of sulfate producing adenosine 5'-phosphosulfate (APS) and diphosphate, the first enzymatic step in sulfur assimilation pathway. APS synthesis involves the formation of a high-energy phosphoric-sulfuric acid anhydride bond driven by GTP hydrolysis by CysN coupled to ATP hydrolysis by CysD. The sequence is that of Sulfate adenylyltransferase subunit 1 from Aliarcobacter butzleri (strain RM4018) (Arcobacter butzleri).